Consider the following 1059-residue polypeptide: RNA-binding protein 26 (1059 aa).

Composition is skewed to basic and acidic residues over residues 98–114 (EKEI…EKEK) and 130–147 (RHKD…DRES). The tract at residues 98 to 275 (EKEIKKDEVN…PVDNSYASGS (178 aa)) is disordered. A compositionally biased stretch (polar residues) spans 172 to 182 (LNSNKVQNAKN). The span at 184–213 (RSRDDRKRDDRFRKREYDRNVPRRDSYRDR) shows a compositional bias: basic and acidic residues. Positions 214 to 231 (YNRRRGRSRSYSRSRSRS) are enriched in basic residues. Residues 232–266 (WSKERQRDRDRSRSRTRSRDKDSGKPKFDLDRPDP) are compositionally biased toward basic and acidic residues. The segment at 327-355 (QMQKKRCRDYDEKGFCMRGDMCPFDHGSD) adopts a C3H1-type zinc-finger fold. The segment covering 375 to 428 (PVLEGPPPPGLPPPPSLLTPPPVNLQPPPVPPPGPLPPSLPPVTGPPPPLPPLQ) has biased composition (pro residues). Residues 375–443 (PVLEGPPPPG…APPNSATSSV (69 aa)) form a disordered region. The segment covering 434-443 (APPNSATSSV) has biased composition (low complexity). The 75-residue stretch at 581 to 655 (TKLELRRIPP…RFIRMYWHRE (75 aa)) folds into the RRM 1 domain. Residues 771 to 873 (GDAQKKKQEA…LLDTELDLYN (103 aa)) adopt a coiled-coil conformation. An RRM 2 domain is found at 942–1011 (RALKISGFTE…QDLKLAWNKP (70 aa)). The disordered stretch occupies residues 1010–1059 (KPVPNASSTEVEDADQEEEEFHEDSIVDDSLLQDDDEEEEDDNESRSWRR). Composition is skewed to acidic residues over residues 1019–1031 (EVED…EEFH) and 1040–1052 (LLQD…EDDN).

May be involved in the turnover of nuclear polyadenylated (pA+) RNA. The polypeptide is RNA-binding protein 26 (Xenopus laevis (African clawed frog)).